The following is a 189-amino-acid chain: Peptidyl-tRNA hydrolase (189 aa).

Tyr15 is a tRNA binding site. His20 (proton acceptor) is an active-site residue. Residues Phe64 and Asn66 each contribute to the tRNA site.

The protein belongs to the PTH family. In terms of assembly, monomer.

It is found in the cytoplasm. The enzyme catalyses an N-acyl-L-alpha-aminoacyl-tRNA + H2O = an N-acyl-L-amino acid + a tRNA + H(+). Hydrolyzes ribosome-free peptidyl-tRNAs (with 1 or more amino acids incorporated), which drop off the ribosome during protein synthesis, or as a result of ribosome stalling. Functionally, catalyzes the release of premature peptidyl moieties from peptidyl-tRNA molecules trapped in stalled 50S ribosomal subunits, and thus maintains levels of free tRNAs and 50S ribosomes. The protein is Peptidyl-tRNA hydrolase of Persephonella marina (strain DSM 14350 / EX-H1).